Consider the following 501-residue polypeptide: ATP synthase subunit alpha (501 aa).

169-176 (GDRQTGKT) contacts ATP.

Belongs to the ATPase alpha/beta chains family. In terms of assembly, F-type ATPases have 2 components, CF(1) - the catalytic core - and CF(0) - the membrane proton channel. CF(1) has five subunits: alpha(3), beta(3), gamma(1), delta(1), epsilon(1). CF(0) has three main subunits: a(1), b(2) and c(9-12). The alpha and beta chains form an alternating ring which encloses part of the gamma chain. CF(1) is attached to CF(0) by a central stalk formed by the gamma and epsilon chains, while a peripheral stalk is formed by the delta and b chains.

Its subcellular location is the cell inner membrane. The enzyme catalyses ATP + H2O + 4 H(+)(in) = ADP + phosphate + 5 H(+)(out). In terms of biological role, produces ATP from ADP in the presence of a proton gradient across the membrane. The alpha chain is a regulatory subunit. The polypeptide is ATP synthase subunit alpha (Campylobacter lari (strain RM2100 / D67 / ATCC BAA-1060)).